A 553-amino-acid polypeptide reads, in one-letter code: Zinc finger protein with KRAB and SCAN domains 3 (553 aa).

A disordered region spans residues Glu-28 to Arg-49. Phosphoserine is present on residues Ser-33 and Ser-44. The SCAN box domain maps to Arg-51–Leu-133. Phosphothreonine is present on Thr-136. Lys-176 participates in a covalent cross-link: Glycyl lysine isopeptide (Lys-Gly) (interchain with G-Cter in SUMO2). Residue Thr-206 is modified to Phosphothreonine. The KRAB domain occupies Leu-213–Pro-273. A Phosphoserine modification is found at Ser-223. 5 C2H2-type zinc fingers span residues Phe-313–His-335, Tyr-341–His-363, Tyr-369–His-391, Tyr-397–His-419, and Tyr-425–His-447. Phosphothreonine is present on Thr-448. 2 C2H2-type zinc fingers span residues Tyr-479 to His-501 and Phe-507 to His-529.

It belongs to the krueppel C2H2-type zinc-finger protein family. Expressed in heart, brain, spleen, lung, liver, skeletal muscle, kidney and testis.

It is found in the nucleus. The protein localises to the cytoplasm. Functionally, transcriptional factor that binds to the consensus sequence 5'-[GT][AG][AGT]GGGG-3' and acts as a repressor of autophagy. Specifically represses expression of genes involved in autophagy and lysosome biogenesis/function such as MAP1LC3B, ULK1 or WIPI2. Associates with chromatin at the ITGB4 and VEGF promoters. This chain is Zinc finger protein with KRAB and SCAN domains 3 (Zkscan3), found in Mus musculus (Mouse).